Reading from the N-terminus, the 463-residue chain is Probable Xaa-Pro aminopeptidase pepP (463 aa).

Residues D259, D270, E393, and E433 each coordinate Mn(2+).

The protein belongs to the peptidase M24B family. It depends on Mn(2+) as a cofactor.

It catalyses the reaction Release of any N-terminal amino acid, including proline, that is linked to proline, even from a dipeptide or tripeptide.. Catalyzes the removal of a penultimate prolyl residue from the N-termini of peptides. In Pyrenophora tritici-repentis (strain Pt-1C-BFP) (Wheat tan spot fungus), this protein is Probable Xaa-Pro aminopeptidase pepP (pepP).